We begin with the raw amino-acid sequence, 86 residues long: MKNTVLNLQDLFLNNARKERIPVTIYLVNGVQVKGLVKGFDSYIILIEGDNRQQNMIYKHAVSTIQPGKYINLTNQNQNNNNNNNR.

Residues 10-71 (DLFLNNARKE…VSTIQPGKYI (62 aa)) form the Sm domain.

The protein belongs to the Hfq family. As to quaternary structure, homohexamer.

RNA chaperone that binds small regulatory RNA (sRNAs) and mRNAs to facilitate mRNA translational regulation in response to envelope stress, environmental stress and changes in metabolite concentrations. Also binds with high specificity to tRNAs. In Clostridioides difficile (strain 630) (Peptoclostridium difficile), this protein is RNA-binding protein Hfq.